Here is a 146-residue protein sequence, read N- to C-terminus: Hemoglobin subunit delta (146 aa).

Residues 2–146 form the Globin domain; that stretch reads HLTGDEKSAV…VATALAHKYH (145 aa). Serine 50 is modified (phosphoserine). Heme b-binding residues include histidine 63 and histidine 92.

It belongs to the globin family. In terms of assembly, heterotetramer of two delta chains and two alpha chains. Red blood cells.

The protein is Hemoglobin subunit delta (HBD) of Saimiri sciureus (Common squirrel monkey).